The chain runs to 131 residues: UPF0102 protein YraN (131 aa).

This sequence belongs to the UPF0102 family.

This Salmonella agona (strain SL483) protein is UPF0102 protein YraN.